Reading from the N-terminus, the 160-residue chain is Endoribonuclease YbeY (160 aa).

The Zn(2+) site is built by histidine 111, histidine 115, and histidine 121.

It belongs to the endoribonuclease YbeY family. Zn(2+) is required as a cofactor.

The protein localises to the cytoplasm. In terms of biological role, single strand-specific metallo-endoribonuclease involved in late-stage 70S ribosome quality control and in maturation of the 3' terminus of the 16S rRNA. The protein is Endoribonuclease YbeY of Stutzerimonas stutzeri (strain A1501) (Pseudomonas stutzeri).